The following is a 103-amino-acid chain: UPF0235 protein Dole_0289 (103 aa).

It belongs to the UPF0235 family.

This chain is UPF0235 protein Dole_0289, found in Desulfosudis oleivorans (strain DSM 6200 / JCM 39069 / Hxd3) (Desulfococcus oleovorans).